The primary structure comprises 99 residues: Aspartyl/glutamyl-tRNA(Asn/Gln) amidotransferase subunit C (99 aa).

This sequence belongs to the GatC family. Heterotrimer of A, B and C subunits.

It catalyses the reaction L-glutamyl-tRNA(Gln) + L-glutamine + ATP + H2O = L-glutaminyl-tRNA(Gln) + L-glutamate + ADP + phosphate + H(+). The catalysed reaction is L-aspartyl-tRNA(Asn) + L-glutamine + ATP + H2O = L-asparaginyl-tRNA(Asn) + L-glutamate + ADP + phosphate + 2 H(+). Allows the formation of correctly charged Asn-tRNA(Asn) or Gln-tRNA(Gln) through the transamidation of misacylated Asp-tRNA(Asn) or Glu-tRNA(Gln) in organisms which lack either or both of asparaginyl-tRNA or glutaminyl-tRNA synthetases. The reaction takes place in the presence of glutamine and ATP through an activated phospho-Asp-tRNA(Asn) or phospho-Glu-tRNA(Gln). The polypeptide is Aspartyl/glutamyl-tRNA(Asn/Gln) amidotransferase subunit C (Burkholderia thailandensis (strain ATCC 700388 / DSM 13276 / CCUG 48851 / CIP 106301 / E264)).